Here is a 259-residue protein sequence, read N- to C-terminus: Flap endonuclease Xni (259 aa).

Asp109 lines the Mg(2+) pocket. The 91-residue stretch at 165-255 folds into the 5'-3' exonuclease domain; the sequence is VKPQQLSDYW…FNLQDLRFTA (91 aa). K(+) is bound by residues Leu176, Ile187, and Ile190. The interaction with DNA stretch occupies residues 189-194; that stretch reads GIGPKA.

It belongs to the Xni family. The cofactor is Mg(2+). K(+) serves as cofactor.

Its function is as follows. Has flap endonuclease activity. During DNA replication, flap endonucleases cleave the 5'-overhanging flap structure that is generated by displacement synthesis when DNA polymerase encounters the 5'-end of a downstream Okazaki fragment. The polypeptide is Flap endonuclease Xni (Vibrio vulnificus (strain CMCP6)).